An 804-amino-acid polypeptide reads, in one-letter code: Leucine--tRNA ligase (804 aa).

The 'HIGH' region motif lies at 40 to 51 (PYPSGAGLHVGH). Positions 576 to 580 (KMSKS) match the 'KMSKS' region motif. ATP is bound at residue Lys-579.

This sequence belongs to the class-I aminoacyl-tRNA synthetase family.

The protein localises to the cytoplasm. The enzyme catalyses tRNA(Leu) + L-leucine + ATP = L-leucyl-tRNA(Leu) + AMP + diphosphate. The protein is Leucine--tRNA ligase of Bacillus subtilis (strain 168).